The following is a 146-amino-acid chain: Putative pre-16S rRNA nuclease (146 aa).

This sequence belongs to the YqgF nuclease family.

The protein localises to the cytoplasm. Functionally, could be a nuclease involved in processing of the 5'-end of pre-16S rRNA. The chain is Putative pre-16S rRNA nuclease from Pseudomonas syringae pv. tomato (strain ATCC BAA-871 / DC3000).